A 356-amino-acid chain; its full sequence is Phosphoribosylformylglycinamidine cyclo-ligase (356 aa).

This sequence belongs to the AIR synthase family.

Its subcellular location is the cytoplasm. The catalysed reaction is 2-formamido-N(1)-(5-O-phospho-beta-D-ribosyl)acetamidine + ATP = 5-amino-1-(5-phospho-beta-D-ribosyl)imidazole + ADP + phosphate + H(+). It functions in the pathway purine metabolism; IMP biosynthesis via de novo pathway; 5-amino-1-(5-phospho-D-ribosyl)imidazole from N(2)-formyl-N(1)-(5-phospho-D-ribosyl)glycinamide: step 2/2. The polypeptide is Phosphoribosylformylglycinamidine cyclo-ligase (Sinorhizobium fredii (strain NBRC 101917 / NGR234)).